We begin with the raw amino-acid sequence, 294 residues long: Glycine--tRNA ligase alpha subunit (294 aa).

This sequence belongs to the class-II aminoacyl-tRNA synthetase family. Tetramer of two alpha and two beta subunits.

The protein localises to the cytoplasm. It catalyses the reaction tRNA(Gly) + glycine + ATP = glycyl-tRNA(Gly) + AMP + diphosphate. The sequence is that of Glycine--tRNA ligase alpha subunit from Trichodesmium erythraeum (strain IMS101).